A 211-amino-acid chain; its full sequence is FMN-dependent NADH:quinone oxidoreductase 2 (211 aa).

FMN-binding positions include Ser10 and 17 to 19; that span reads SRS.

This sequence belongs to the azoreductase type 1 family. Homodimer. It depends on FMN as a cofactor.

The catalysed reaction is 2 a quinone + NADH + H(+) = 2 a 1,4-benzosemiquinone + NAD(+). It catalyses the reaction N,N-dimethyl-1,4-phenylenediamine + anthranilate + 2 NAD(+) = 2-(4-dimethylaminophenyl)diazenylbenzoate + 2 NADH + 2 H(+). Its function is as follows. Quinone reductase that provides resistance to thiol-specific stress caused by electrophilic quinones. In terms of biological role, also exhibits azoreductase activity. Catalyzes the reductive cleavage of the azo bond in aromatic azo compounds to the corresponding amines. The sequence is that of FMN-dependent NADH:quinone oxidoreductase 2 from Listeria monocytogenes serotype 4b (strain F2365).